A 344-amino-acid polypeptide reads, in one-letter code: C5a anaphylatoxin chemotactic receptor 2 (344 aa).

At 1-44 (MMNHTTSEYYDYEYDHEHYSDLPDVPVDCPAGTCFTSDVYLIVL) the chain is on the extracellular side. Asn-3 carries N-linked (GlcNAc...) asparagine glycosylation. Residues 45–67 (LVLYAAVFLVGVPGNTLVAWVTW) traverse the membrane as a helical segment. The Cytoplasmic portion of the chain corresponds to 68 to 78 (KESRHRLGASW). The helical transmembrane segment at 79-101 (FLHLTMADLLCCVSLPFLAVPIA) threads the bilayer. The Extracellular portion of the chain corresponds to 102–120 (QKGHWPYGAAGCWLLSSIT). Residues Cys-113 and Cys-192 are joined by a disulfide bond. Residues 121 to 143 (ILSMYASVLLLTGLSGDLFLLAF) form a helical membrane-spanning segment. The Cytoplasmic segment spans residues 144-155 (RPSWKGADHRTF). A helical membrane pass occupies residues 156-178 (GVRVVQASSWMLGLLLTVPSAVY). Residues 179–208 (RRLLQEHYPPRLVCGIDYGGSVSAEVAITT) lie on the Extracellular side of the membrane. The chain crosses the membrane as a helical span at residues 209–231 (VRFLFGFLGPLVFMAGCHGILQR). Over 232–243 (QMARRHWPLGTA) the chain is Cytoplasmic. Residues 244–266 (VVVGFFICWTPYHVLRVIIAAAP) form a helical membrane-spanning segment. Topologically, residues 267 to 280 (PHSLLLARVLEAEP) are extracellular. A helical transmembrane segment spans residues 281–300 (LFNGLALAHSALNPIMFLYF). The Cytoplasmic portion of the chain corresponds to 301-344 (GRKQLCKSLQAACHWALRDPQDEESAVTKVSISTSHEMVSEMPV). Ser-325 bears the Phosphoserine mark.

Belongs to the G-protein coupled receptor 1 family. In terms of assembly, interacts with C3 (the anaphylatoxin peptide C3a and the adipogenic hormone ASP); the interaction occurs with higher affinity for ASP, enhancing the phosphorylation and activation of GPR77, recruitment of ARRB2 to the cell surface and endocytosis of GRP77. Highly expressed in liver and spleen. Lower levels in intestine, brain and kidney. Also expressed in adipose tissues with highest levels in gonadal and ingual fat depots. Lower levels in brown tissue.

The protein resides in the cell membrane. Its function is as follows. Receptor for the chemotactic and inflammatory C3a, C4a and C5a anaphylatoxin peptides and also for their dearginated forms ASP/C3adesArg, C4adesArg and C5adesArg respectively. Couples weakly to G(i)-mediated signaling pathways. The sequence is that of C5a anaphylatoxin chemotactic receptor 2 (C5ar2) from Mus musculus (Mouse).